Consider the following 487-residue polypeptide: DEAD-box ATP-dependent RNA helicase CshA (487 aa).

The short motif at 3-31 (ITFQDFQLSSDLTKAIKRMGFEEATPIQA) is the Q motif element. The 171-residue stretch at 34–204 (IPLGLANKDV…ERFMTNPEHV (171 aa)) folds into the Helicase ATP-binding domain. 47-54 (AQTGTGKT) is an ATP binding site. The DEAD box motif lies at 152-155 (DEAD). The 161-residue stretch at 215-375 (NIQQFYLEVH…RMKAPTLDEA (161 aa)) folds into the Helicase C-terminal domain. Residues 428–440 (DNTPVRLTEEAPL) show a composition bias toward basic and acidic residues. A disordered region spans residues 428–487 (DNTPVRLTEEAPLRTKRNKNHHHRSSKRRDGGGYRGKNNRSSYDKKRSSNDRRQKKSYNS). A compositionally biased stretch (basic residues) spans 441-454 (RTKRNKNHHHRSSK). Positions 469–479 (SYDKKRSSNDR) are enriched in basic and acidic residues.

It belongs to the DEAD box helicase family. CshA subfamily. Oligomerizes, may be a member of the RNA degradosome.

It is found in the cytoplasm. The catalysed reaction is ATP + H2O = ADP + phosphate + H(+). Its function is as follows. DEAD-box RNA helicase possibly involved in RNA degradation. Unwinds dsRNA in both 5'- and 3'-directions, has RNA-dependent ATPase activity. The chain is DEAD-box ATP-dependent RNA helicase CshA from Bacillus licheniformis (strain ATCC 14580 / DSM 13 / JCM 2505 / CCUG 7422 / NBRC 12200 / NCIMB 9375 / NCTC 10341 / NRRL NRS-1264 / Gibson 46).